Consider the following 352-residue polypeptide: MASWPPLQLQSSNQSQLFPQNATACDNAPEAWDLLHRVLPTFIISICSFGLLGNLFVLLVFLLPRRRLNVAEIYLANLAASDLVFVLGLPFWAENIWNQFNWPFGALLCRVINGIIKANLFISIFLVVAISQDRYCVLVHPMASRRRQRRRQARVTCVLIWVVGGLLSIPTFLLRSIQAVPDLNITACILLLPHEAWHFARIVELNILAFLLPLAAIIFFNYHILASLRGREEVSRTRCGGSKDSKTTALILTLVVAFLVCWAPYHFFAFLEFLFQVQAVRGCFWEDFIDLGLQLANFLAFTNSSLNPVIYVFAGRLFRTKVWELYKQCTPKSLAPISSSHRKEIFQLFWRN.

Topologically, residues 1–41 are extracellular; it reads MASWPPLQLQSSNQSQLFPQNATACDNAPEAWDLLHRVLPT. N13 and N21 each carry an N-linked (GlcNAc...) asparagine glycan. Residues 42–62 form a helical membrane-spanning segment; the sequence is FIISICSFGLLGNLFVLLVFL. At 63-72 the chain is on the cytoplasmic side; that stretch reads LPRRRLNVAE. A helical membrane pass occupies residues 73–93; sequence IYLANLAASDLVFVLGLPFWA. At 94–110 the chain is on the extracellular side; that stretch reads ENIWNQFNWPFGALLCR. An intrachain disulfide couples C109 to C188. The chain crosses the membrane as a helical span at residues 111–131; the sequence is VINGIIKANLFISIFLVVAIS. Over 132–153 the chain is Cytoplasmic; the sequence is QDRYCVLVHPMASRRRQRRRQA. The chain crosses the membrane as a helical span at residues 154–174; that stretch reads RVTCVLIWVVGGLLSIPTFLL. Over 175–206 the chain is Extracellular; it reads RSIQAVPDLNITACILLLPHEAWHFARIVELN. The N-linked (GlcNAc...) asparagine glycan is linked to N184. The chain crosses the membrane as a helical span at residues 207–227; sequence ILAFLLPLAAIIFFNYHILAS. Residues 228-250 are Cytoplasmic-facing; it reads LRGREEVSRTRCGGSKDSKTTAL. The helical transmembrane segment at 251-271 threads the bilayer; that stretch reads ILTLVVAFLVCWAPYHFFAFL. Residues 272-294 are Extracellular-facing; the sequence is EFLFQVQAVRGCFWEDFIDLGLQ. Residues 295-315 form a helical membrane-spanning segment; sequence LANFLAFTNSSLNPVIYVFAG. Residues 316–352 lie on the Cytoplasmic side of the membrane; it reads RLFRTKVWELYKQCTPKSLAPISSSHRKEIFQLFWRN. A lipid anchor (S-palmitoyl cysteine) is attached at C329.

Belongs to the G-protein coupled receptor 1 family. Bradykinin receptor subfamily. BDKRB1 sub-subfamily.

Its subcellular location is the cell membrane. In terms of biological role, this is a receptor for bradykinin. Could be a factor in chronic pain and inflammation. This is B1 bradykinin receptor (BDKRB1) from Macaca fascicularis (Crab-eating macaque).